The primary structure comprises 486 residues: FAD-dependent oxidoreductase domain-containing protein 1 (486 aa).

A helical membrane pass occupies residues 66 to 86; it reads VVVVGGGVLGLSVAYWLKQLE.

Associates with components of the mitochondrial respiratory chain complex I. Requires FAD as cofactor.

It localises to the mitochondrion inner membrane. Functionally, required for the assembly of the mitochondrial membrane respiratory chain NADH dehydrogenase (Complex I). Involved in mid-late stages of complex I assembly. The chain is FAD-dependent oxidoreductase domain-containing protein 1 (FOXRED1) from Macaca fascicularis (Crab-eating macaque).